The primary structure comprises 449 residues: MKMIDIVKNKKVLVLGLAKSGESAARLLDKLGAIVTVNDGKPFEENPTAQSLLEDGIRVICGSHPLELLDEDFALMVKNPGIRYDNPMVEKAIGKGIPVWTEVELAYLVSDVPIVGITGSNGKTTTTTMIAEVLNAGKKPAKLCGNIGYPASSVAQTATAEDTLVMELSSFQLMGTESFHPHIAVVTNLIASHIDYHGTFEDYVAAKWMIQRQMTAEDFVVINFNQKEAKELAGQTKATVVPFSTQEVVDGAYLADGKLYFKGEYIMDADQIGVPGSHNVENALATIVVAKLLGVDQQAIQESLSAFGGVKHRLQFVGEINGVSFYNDSKSTNILATQKALSGFDNSKVILIAGGLDRGNEFDELVPDLVGLKKMVILGQSAPRVQRAADKAEVETIEALDIADATRKAFAIAEKGDIVLLSPANASWDMYANFEVRGDVFLQTFEELK.

Residue 119-125 participates in ATP binding; the sequence is GSNGKTT.

It belongs to the MurCDEF family.

It localises to the cytoplasm. It carries out the reaction UDP-N-acetyl-alpha-D-muramoyl-L-alanine + D-glutamate + ATP = UDP-N-acetyl-alpha-D-muramoyl-L-alanyl-D-glutamate + ADP + phosphate + H(+). It participates in cell wall biogenesis; peptidoglycan biosynthesis. Functionally, cell wall formation. Catalyzes the addition of glutamate to the nucleotide precursor UDP-N-acetylmuramoyl-L-alanine (UMA). This Streptococcus suis (strain 98HAH33) protein is UDP-N-acetylmuramoylalanine--D-glutamate ligase.